Here is a 511-residue protein sequence, read N- to C-terminus: Colicin-B (511 aa).

The TonB box signature appears at 17-24 (DTMVVWPS). 2 helical membrane passes run 455-475 (MASA…LIAF) and 477-497 (LSAT…GAFI).

This sequence belongs to the channel forming colicin family.

Its subcellular location is the cell membrane. In terms of biological role, this colicin is a channel-forming colicin. This class of transmembrane toxins depolarize the cytoplasmic membrane, leading to dissipation of cellular energy. Its function is as follows. Colicins are polypeptide toxins produced by and active against E.coli and closely related bacteria. The polypeptide is Colicin-B (cba) (Escherichia coli).